The primary structure comprises 445 residues: Phosphoglucosamine mutase (445 aa).

The active-site Phosphoserine intermediate is S102. S102, D241, D243, and D245 together coordinate Mg(2+). S102 bears the Phosphoserine mark.

The protein belongs to the phosphohexose mutase family. Requires Mg(2+) as cofactor. Activated by phosphorylation.

It catalyses the reaction alpha-D-glucosamine 1-phosphate = D-glucosamine 6-phosphate. Its function is as follows. Catalyzes the conversion of glucosamine-6-phosphate to glucosamine-1-phosphate. This chain is Phosphoglucosamine mutase, found in Acinetobacter baumannii (strain SDF).